Here is a 203-residue protein sequence, read N- to C-terminus: Large ribosomal subunit protein bL25 (203 aa).

The protein belongs to the bacterial ribosomal protein bL25 family. CTC subfamily. In terms of assembly, part of the 50S ribosomal subunit; part of the 5S rRNA/L5/L18/L25 subcomplex. Contacts the 5S rRNA. Binds to the 5S rRNA independently of L5 and L18.

In terms of biological role, this is one of the proteins that binds to the 5S RNA in the ribosome where it forms part of the central protuberance. The protein is Large ribosomal subunit protein bL25 of Paraburkholderia phymatum (strain DSM 17167 / CIP 108236 / LMG 21445 / STM815) (Burkholderia phymatum).